We begin with the raw amino-acid sequence, 521 residues long: Glucose-6-phosphate isomerase (521 aa).

Glu-327 acts as the Proton donor in catalysis. Residues His-358 and Lys-486 contribute to the active site.

It belongs to the GPI family.

The protein resides in the cytoplasm. It catalyses the reaction alpha-D-glucose 6-phosphate = beta-D-fructose 6-phosphate. It participates in carbohydrate biosynthesis; gluconeogenesis. The protein operates within carbohydrate degradation; glycolysis; D-glyceraldehyde 3-phosphate and glycerone phosphate from D-glucose: step 2/4. In terms of biological role, catalyzes the reversible isomerization of glucose-6-phosphate to fructose-6-phosphate. The sequence is that of Glucose-6-phosphate isomerase from Bordetella petrii (strain ATCC BAA-461 / DSM 12804 / CCUG 43448).